The primary structure comprises 333 residues: Diaminopimelate epimerase (333 aa).

N24 and N79 together coordinate substrate. C88 functions as the Proton donor in the catalytic mechanism. Substrate is bound by residues 89–90 (GN), N176, N210, and 228–229 (ER). The active-site Proton acceptor is the C237. 238–239 (GT) contributes to the substrate binding site.

The protein belongs to the diaminopimelate epimerase family. In terms of assembly, homodimer.

Its subcellular location is the cytoplasm. It carries out the reaction (2S,6S)-2,6-diaminopimelate = meso-2,6-diaminopimelate. Its pathway is amino-acid biosynthesis; L-lysine biosynthesis via DAP pathway; DL-2,6-diaminopimelate from LL-2,6-diaminopimelate: step 1/1. Its function is as follows. Catalyzes the stereoinversion of LL-2,6-diaminopimelate (L,L-DAP) to meso-diaminopimelate (meso-DAP), a precursor of L-lysine and an essential component of the bacterial peptidoglycan. The polypeptide is Diaminopimelate epimerase (Clostridium acetobutylicum (strain ATCC 824 / DSM 792 / JCM 1419 / IAM 19013 / LMG 5710 / NBRC 13948 / NRRL B-527 / VKM B-1787 / 2291 / W)).